The primary structure comprises 338 residues: MARKLFTPITIKDMTLKNRIVMSPMCMYSSHEKDGKLTPFHMAHYISRAIGQVGLIIVEASAVNPQGRITDQDLGIWSDEHIEGFAKLTEQVKEQGSKIGIQLAHAGRKAELEGDIFAPSAIAFDEQSATPVEMSAEKVKETVQEFKQAAARAKEAGFDVIEIHAAHGYLIHEFLSPLSNHRTDEYGGSPENRYRFLREIIDEVKQVWDGPLFVRVSASDYTDKGLDIADHIGFAKWMKEQGVDLIDCSSGALVHADINVFPGYQVSFAEKIREQADMATGAVGMITDGSMAEEILQNGRADLIFIGRELLRDPFFARTAAKQLNTEIPAPVQYERGW.

Ser23 to Cys26 serves as a coordination point for FMN. Tyr28 lines the substrate pocket. The FMN site is built by Ala60 and Gln102. His164 to His167 is a binding site for substrate. FMN contacts are provided by residues Arg215 and Gly307 to Arg308.

Belongs to the NADH:flavin oxidoreductase/NADH oxidase family. NamA subfamily. As to quaternary structure, homotetramer. Composed of a dimer of active dimers. The cofactor is FMN.

It carries out the reaction A + NADPH + H(+) = AH2 + NADP(+). Inhibited by p-hydroxybenzaldehyde (pHBA) and p-nitrophenol (pNP). Functionally, catalyzes the reduction of the double bond of an array of alpha,beta-unsaturated aldehydes and ketones. It also reduces the nitro group of nitroester and nitroaromatic compounds. It could have a role in detoxification processes. The polypeptide is NADPH dehydrogenase (namA) (Bacillus subtilis (strain 168)).